A 314-amino-acid chain; its full sequence is Homoserine kinase (314 aa).

96–106 serves as a coordination point for ATP; that stretch reads PIGSGLGSSAC.

Belongs to the GHMP kinase family. Homoserine kinase subfamily.

The protein resides in the cytoplasm. The catalysed reaction is L-homoserine + ATP = O-phospho-L-homoserine + ADP + H(+). It participates in amino-acid biosynthesis; L-threonine biosynthesis; L-threonine from L-aspartate: step 4/5. Catalyzes the ATP-dependent phosphorylation of L-homoserine to L-homoserine phosphate. The protein is Homoserine kinase of Haemophilus influenzae (strain PittEE).